The chain runs to 137 residues: Large ribosomal subunit protein uL16 (137 aa).

Belongs to the universal ribosomal protein uL16 family. Part of the 50S ribosomal subunit.

Its function is as follows. Binds 23S rRNA and is also seen to make contacts with the A and possibly P site tRNAs. The sequence is that of Large ribosomal subunit protein uL16 from Brucella abortus (strain S19).